We begin with the raw amino-acid sequence, 177 residues long: Large ribosomal subunit protein uL6 (177 aa).

Belongs to the universal ribosomal protein uL6 family. Part of the 50S ribosomal subunit.

In terms of biological role, this protein binds to the 23S rRNA, and is important in its secondary structure. It is located near the subunit interface in the base of the L7/L12 stalk, and near the tRNA binding site of the peptidyltransferase center. The sequence is that of Large ribosomal subunit protein uL6 from Rhodopseudomonas palustris (strain HaA2).